We begin with the raw amino-acid sequence, 125 residues long: Photoactive yellow protein (125 aa).

The PAS domain maps to 23–86 (LDGLAFGAIQ…GKFKEGVASG (64 aa)). Cys69 is subject to S-(4-hydroxycinnamyl)cysteine.

It belongs to the photoactive yellow protein family. As to quaternary structure, monomer. Post-translationally, the 4-hydroxycinnamic acid (p-coumaric acid) chromophore is covalently bound via a thioester linkage.

In terms of biological role, photoactive blue light protein. Probably functions as a photoreceptor for a negative phototaxis response. The protein is Photoactive yellow protein (pyp) of Halorhodospira halophila (Ectothiorhodospira halophila).